The primary structure comprises 310 residues: N-acetyl-gamma-glutamyl-phosphate reductase (310 aa).

Cys117 is a catalytic residue.

It belongs to the NAGSA dehydrogenase family. Type 2 subfamily.

The protein localises to the cytoplasm. The catalysed reaction is N-acetyl-L-glutamate 5-semialdehyde + phosphate + NADP(+) = N-acetyl-L-glutamyl 5-phosphate + NADPH + H(+). It participates in amino-acid biosynthesis; L-arginine biosynthesis; N(2)-acetyl-L-ornithine from L-glutamate: step 3/4. Its function is as follows. Catalyzes the NADPH-dependent reduction of N-acetyl-5-glutamyl phosphate to yield N-acetyl-L-glutamate 5-semialdehyde. This chain is N-acetyl-gamma-glutamyl-phosphate reductase, found in Allorhizobium ampelinum (strain ATCC BAA-846 / DSM 112012 / S4) (Agrobacterium vitis (strain S4)).